The primary structure comprises 253 residues: UPF0246 protein lhv_1883 (253 aa).

This sequence belongs to the UPF0246 family.

This Lactobacillus helveticus (strain DPC 4571) protein is UPF0246 protein lhv_1883.